We begin with the raw amino-acid sequence, 529 residues long: GMP synthase [glutamine-hydrolyzing] (529 aa).

The Glutamine amidotransferase type-1 domain maps to 13–204 (PVLVVDFGAQ…LLETAGLEPT (192 aa)). The active-site Nucleophile is Cys-90. Residues His-178 and Glu-180 contribute to the active site. In terms of domain architecture, GMPS ATP-PPase spans 205-403 (WTAGNIAEQL…LGLPEEIVAR (199 aa)). 233–239 (SGGVDSA) provides a ligand contact to ATP.

In terms of assembly, homodimer.

It catalyses the reaction XMP + L-glutamine + ATP + H2O = GMP + L-glutamate + AMP + diphosphate + 2 H(+). The protein operates within purine metabolism; GMP biosynthesis; GMP from XMP (L-Gln route): step 1/1. In terms of biological role, catalyzes the synthesis of GMP from XMP. The chain is GMP synthase [glutamine-hydrolyzing] from Corynebacterium jeikeium (strain K411).